The primary structure comprises 79 residues: Moronecidin (79 aa).

The signal sequence occupies residues 1-22 (MKCATLFLVLSMVVLMAEPGDA). At Gly44 the chain carries Glycine amide. Residues 45–79 (GKAEQDQQDQQYQQEQQEQQAQQYQRFNRERAAFD) are disordered. Positions 47–79 (AEQDQQDQQYQQEQQEQQAQQYQRFNRERAAFD) are excised as a propeptide. Low complexity predominate over residues 52–69 (QDQQYQQEQQEQQAQQYQ).

Expressed in mast cells in gill, skin and gut, and in lining blood vessels in the viscera. Also in intestine, spleen, anterior kidney, and blood cells.

The protein localises to the secreted. In terms of biological role, antimicrobial peptide with broad-spectrum activity against Gram-positive and Gram-negative bacteria as well as against a variety of fungi. Rapidly inactivates channel catfish herpesvirus (ED(50)=4 uM) and frog virus 3 (ED(50)=13 uM) over a wide temperature range. Seems to disrupt the membranes by adopting an alpha helical conformation and forming toroidal pores. Has hemolytic activity. This Morone saxatilis (Striped bass) protein is Moronecidin.